A 276-amino-acid chain; its full sequence is Omega-amidase NIT2 (276 aa).

One can recognise a CN hydrolase domain in the interval 4–248 (FRLALIQLQV…ETILYSDIDL (245 aa)). A Phosphoserine modification is found at Ser26. Glu43 serves as the catalytic Proton acceptor. Lys68 is subject to N6-acetyllysine; alternate. Lys68 is subject to N6-succinyllysine; alternate. Lys112 serves as the catalytic Proton donor. Lys123 and Lys130 each carry N6-succinyllysine. The Nucleophile role is filled by Cys153.

It belongs to the carbon-nitrogen hydrolase superfamily. NIT1/NIT2 family. As to quaternary structure, homodimer.

Its subcellular location is the cytoplasm. It carries out the reaction a monoamide of a dicarboxylate + H2O = a dicarboxylate + NH4(+). It catalyses the reaction 2-oxoglutaramate + H2O = 2-oxoglutarate + NH4(+). The catalysed reaction is 2-oxosuccinamate + H2O = oxaloacetate + NH4(+). Its function is as follows. Has omega-amidase activity. The role of omega-amidase is to remove potentially toxic intermediates by converting 2-oxoglutaramate and 2-oxosuccinamate to biologically useful 2-oxoglutarate and oxaloacetate, respectively. Can also hydrolyze gamma-monomethyl-alpha-ketoglutarate in vitro. In Mus musculus (Mouse), this protein is Omega-amidase NIT2.